The chain runs to 385 residues: MKDVILIANAGSSSLKISIFGIQNKKVKDKIYNIFLEKNNNKILFYINQKQESAISIKDNAIEMMINLFEEWWTKQSALNLIATGHRIVHGGKNFNKPVIVNEKIIKELRVLIPLSPLHQPYNLQVLDLFFQKYKDISHIICFDTSFHYTNPPITKAFGLPKQYYDKGIMRYGFHGLSYQYVSSHFKEITMEDLPTKTIIAHLGSGSSLCAIKNGLSLTSSMGFSVLDGVMMATRTGNLDPGVVLYLINHEKMTMKEITELLYKKSGLLGISGESSDMRTLITNNSHDSKFAVELFVYRIVLEIGKLIAALEGIDCIIFTAGIGQNSAVIREMISGKLSWLGIKIDYGKNQKNEHRISTKGSKVKVFVVPTNEELIIAEEVMKFL.

Asn9 is a Mg(2+) binding site. Lys16 contributes to the ATP binding site. Arg87 serves as a coordination point for substrate. The active-site Proton donor/acceptor is Asp144. Residues His202 to Gly206 and Asp277 to Arg279 contribute to the ATP site. Position 373 (Glu373) interacts with Mg(2+).

The protein belongs to the acetokinase family. Homodimer. It depends on Mg(2+) as a cofactor. The cofactor is Mn(2+).

It localises to the cytoplasm. The catalysed reaction is acetate + ATP = acetyl phosphate + ADP. The protein operates within metabolic intermediate biosynthesis; acetyl-CoA biosynthesis; acetyl-CoA from acetate: step 1/2. Functionally, catalyzes the formation of acetyl phosphate from acetate and ATP. Can also catalyze the reverse reaction. The sequence is that of Acetate kinase from Rickettsia typhi (strain ATCC VR-144 / Wilmington).